The primary structure comprises 134 residues: uncharacterized protein (134 aa).

Residues 59-92 (VSKPKRRSPHPHGNKAADKRKTTEKEPERKKRVG) form a disordered region. The segment covering 61-71 (KPKRRSPHPHG) has biased composition (basic residues). Basic and acidic residues predominate over residues 73–87 (KAADKRKTTEKEPER).

This is an uncharacterized protein from Saccharomyces cerevisiae (strain ATCC 204508 / S288c) (Baker's yeast).